Here is a 451-residue protein sequence, read N- to C-terminus: Transcription factor TGAL8 (451 aa).

The span at 1 to 22 (MAYPSTSGMIQASSSLHGSITR) shows a compositional bias: polar residues. Disordered regions lie at residues 1–32 (MAYPSTSGMIQASSSLHGSITRRNPEGYDMPS) and 70–151 (FPSQ…PKTL). The span at 141–150 (KGPKTPDPKT) shows a compositional bias: basic and acidic residues. The 45-residue stretch at 147–191 (DPKTLRRLAQNREAARKSRLRKKAYIQQLETGRIRLAHLEQEIQF) folds into the bZIP domain. The segment at 149 to 169 (KTLRRLAQNREAARKSRLRKK) is basic motif. The segment at 175–189 (LETGRIRLAHLEQEI) is leucine-zipper. The region spanning 208-444 (AALFNLEYER…RALALFWTTT (237 aa)) is the DOG1 domain.

This sequence belongs to the bZIP family. As to quaternary structure, interacts with NPR5/NH4, NH5.1 and NH5.2.

The protein localises to the nucleus. Functionally, transcriptional regulator involved in defense response. This is Transcription factor TGAL8 from Oryza sativa subsp. japonica (Rice).